The sequence spans 1025 residues: Rho GTPase-activating protein Graf (1025 aa).

Positions 271-388 (IFTKRGYLFL…WISAMDGTEP (118 aa)) constitute a PH domain. Residues 402–589 (YHLDEAGFMF…ILIDNYERIF (188 aa)) form the Rho-GAP domain. The disordered stretch occupies residues 824 to 866 (GSASGPQQHPPVQRGLHSYGQTKHYSPLMPTSTSSSNDSVCDS). Over residues 854-866 (TSTSSSNDSVCDS) the composition is skewed to low complexity. Positions 963 to 1023 (TGTARVRTLY…PENYVEHLKP (61 aa)) constitute an SH3 domain.

As to quaternary structure, interacts with Egfr (when ubiquitinated). In the adult brain, expressed in the antennal lobe, the subesophageal ganglion and the alpha/beta neurons of the mushroom body.

The protein resides in the cytoplasm. The protein localises to the cytosol. It is found in the cytoplasmic vesicle. Its function is as follows. GTPase-activating protein for Rho family proteins. Essential component of the CLIC (clathrin-independent carrier)/GEEC (GPI-anchored protein-enriched early endocytic compartment) endocytic pathway. During hematopoiesis, inhibits Egfr-ras-MAPK signaling by promoting Spi-induced Egfr internalization through CLIC/GEEC endocytosis, thereby preventing plasmatocyte overproliferation. Essential for normal mushroom body (MB) development and consequently the formation of olfactory long-term memories. During MD development, required to stop the MB beta-lobe from crossing the brain midline, possibly acting via its role in the CLIC/GEEC endocytic pathway to down-regulate the Egfr-ras-MAPK signaling at the tip of the beta-lobes. Required during embryo cellularization for maintaining and regulating the rate of actomyosin ring constriction. During cellularization, inhibits Rho-GTP levels at the furrow canal tip in a spatiotemporal manner, thus delaying the onset of actomyosin contraction and ensuring appropriate closure of the cells at the base of nuclei after membrane extension. In Drosophila melanogaster (Fruit fly), this protein is Rho GTPase-activating protein Graf.